A 275-amino-acid chain; its full sequence is MNYNQPATLQAAILDWAGTVVDFGSFAPTQIFVEAFAEFGVQVSLEEARGPMGMGKWDHIRTLCDIPAIAERYRAVFGRLPSDDDVTAIYERFMPLQIEKIAEHSALIPGALQAIAELRGMGLKIGSCSGYPAVVMEKVVALAETNGYVADHVVATDEVPNGRPWPAQALANVIALGIDDVAACVKVDDTWPGILEGRRAGMWTVALTCSGNALGLTYEQYQALPAAELERERTRIEQMFEGSRPHYLIETIAELPAVVRDINARLARGEMPQGN.

Residue Asp15 is the Nucleophile of the active site. Positions 15 and 17 each coordinate Mg(2+). The active-site Schiff-base intermediate with substrate is the Lys56. Residue Asp189 coordinates Mg(2+).

It belongs to the HAD-like hydrolase superfamily. PhnX family. Homodimer. Requires Mg(2+) as cofactor.

The catalysed reaction is phosphonoacetaldehyde + H2O = acetaldehyde + phosphate + H(+). Its activity is regulated as follows. Inhibited by phosphite, moderately inhibited by phosphonic acids, the corresponding aminophosphonic acids activate the enzyme. Involved in phosphonate degradation. The sequence is that of Phosphonoacetaldehyde hydrolase from Pseudomonas aeruginosa (strain ATCC 15692 / DSM 22644 / CIP 104116 / JCM 14847 / LMG 12228 / 1C / PRS 101 / PAO1).